The chain runs to 201 residues: 5'(3')-deoxyribonucleotidase, cytosolic type (201 aa).

Asp-10 functions as the Nucleophile in the catalytic mechanism. Mg(2+)-binding residues include Asp-10 and Asp-12. The active-site Proton donor is Asp-12. 5 residues coordinate substrate: Phe-18, Phe-44, Tyr-65, Thr-99, and Lys-134. Asp-145 contributes to the Mg(2+) binding site. Residue Ser-182 is modified to Phosphoserine.

This sequence belongs to the 5'(3')-deoxyribonucleotidase family. Homodimer. It depends on Mg(2+) as a cofactor. Detected in skeletal muscle, heart and pancreas.

The protein resides in the cytoplasm. Its function is as follows. Dephosphorylates the 5' and 2'(3')-phosphates of deoxyribonucleotides, with a preference for dUMP and dTMP, intermediate activity towards dGMP, and low activity towards dCMP and dAMP. The protein is 5'(3')-deoxyribonucleotidase, cytosolic type (NT5C) of Homo sapiens (Human).